A 791-amino-acid chain; its full sequence is Protein FAM47A (791 aa).

3 disordered regions span residues 195-257, 274-409, and 449-573; these read PVSH…TRRR, EDAR…TGVC, and VKKT…SEPP. 2 stretches are compositionally biased toward basic and acidic residues: residues 274–288 and 333–342; these read EDARAPCEGREKTTD and GESHLRLEHS. Positions 349–358 are enriched in polar residues; sequence SLRSEPSETG. Residues 449-462 show a composition bias toward basic and acidic residues; the sequence is VKKTKEPTEPHKSP.

It belongs to the FAM47 family.

The sequence is that of Protein FAM47A (FAM47A) from Homo sapiens (Human).